Here is a 371-residue protein sequence, read N- to C-terminus: tRNA-specific 2-thiouridylase MnmA (371 aa).

Residues 7–14 (AMSGGVDS) and Leu33 each bind ATP. Residue Cys101 is the Nucleophile of the active site. Cys101 and Cys213 are disulfide-bonded. Position 125 (Gly125) interacts with ATP. The tract at residues 163-165 (KDQ) is interaction with tRNA. Cys213 functions as the Cysteine persulfide intermediate in the catalytic mechanism.

This sequence belongs to the MnmA/TRMU family.

It is found in the cytoplasm. It catalyses the reaction S-sulfanyl-L-cysteinyl-[protein] + uridine(34) in tRNA + AH2 + ATP = 2-thiouridine(34) in tRNA + L-cysteinyl-[protein] + A + AMP + diphosphate + H(+). Catalyzes the 2-thiolation of uridine at the wobble position (U34) of tRNA, leading to the formation of s(2)U34. This chain is tRNA-specific 2-thiouridylase MnmA, found in Roseiflexus castenholzii (strain DSM 13941 / HLO8).